Consider the following 440-residue polypeptide: Gamma-aminobutyric acid receptor subunit pi (440 aa).

The signal sequence occupies residues 1-23 (MSYSLYLAFVCLNLLAQRMCIQG). Over 24–241 (NQFNVEVSRS…LVLQFELRRN (218 aa)) the chain is Extracellular. N-linked (GlcNAc...) asparagine glycosylation is found at N43, N102, and N145. The cysteines at positions 160 and 174 are disulfide-linked. N196 and N228 each carry an N-linked (GlcNAc...) asparagine glycan. The helical transmembrane segment at 242-262 (VLYFILETYVPSTFLVVLSWV) threads the bilayer. Residues 263–270 (SFWISLES) are Cytoplasmic-facing. A helical transmembrane segment spans residues 271–290 (VPARTCIGVTTVLSMTTLMI). Topologically, residues 291–301 (GSRTSLPNTNC) are extracellular. A helical membrane pass occupies residues 302-322 (FIKAIDVYLGICFSFVFGALL). The Cytoplasmic segment spans residues 323 to 419 (EYAVAHYSSL…NPSNVDRYSK (97 aa)). The helical transmembrane segment at 420-440 (LLFPLIFMLANVFYWAYYMYF) threads the bilayer.

Belongs to the ligand-gated ion channel (TC 1.A.9) family. Gamma-aminobutyric acid receptor (TC 1.A.9.5) subfamily. GABRP sub-subfamily. Heteropentamer, formed by a combination of alpha (GABRA1-6), beta (GABRB1-3), gamma (GABRG1-3), delta (GABRD), epsilon (GABRE), rho (GABRR1-3), pi (GABRP) and theta (GABRQ) chains, each subunit exhibiting distinct physiological and pharmacological properties. In terms of tissue distribution, expressed in lungs, in alveolar epithelium.

The protein resides in the cell membrane. It is found in the apical cell membrane. It catalyses the reaction chloride(in) = chloride(out). In terms of biological role, pi subunit of the heteropentameric ligand-gated chloride channel gated by gamma-aminobutyric acid (GABA). GABA-gated chloride channels, also named GABA(A) receptors (GABAAR), consist of five subunits arranged around a central pore and contain GABA active binding site(s) located at the alpha and beta subunit interfaces. When activated by GABA, GABAARs selectively allow the flow of chloride anions across the cell membrane down their electrochemical gradient. Pi-containing GABAARs are mostly located in peripheral tissues. In the uterus, pi subunits modulate uterus contraction by altering the sensitivity of GABAARs to pregnanolone. In the lungs, pi-containing GABAARs contribute to pulmonary fluid transport via luminal secretion of chloride. The sequence is that of Gamma-aminobutyric acid receptor subunit pi from Rattus norvegicus (Rat).